A 511-amino-acid polypeptide reads, in one-letter code: Glutamyl-tRNA(Gln) amidotransferase subunit B, mitochondrial (511 aa).

The N-terminal 6 residues, 1–6 (MLRRYL), are a transit peptide targeting the mitochondrion.

It belongs to the GatB/GatE family. GatB subfamily. Subunit of the heterotrimeric GatFAB amidotransferase (AdT) complex, composed of A, B and F subunits.

It is found in the mitochondrion. It carries out the reaction L-glutamyl-tRNA(Gln) + L-glutamine + ATP + H2O = L-glutaminyl-tRNA(Gln) + L-glutamate + ADP + phosphate + H(+). Its function is as follows. Allows the formation of correctly charged Gln-tRNA(Gln) through the transamidation of misacylated Glu-tRNA(Gln) in the mitochondria. The reaction takes place in the presence of glutamine and ATP through an activated gamma-phospho-Glu-tRNA(Gln). The sequence is that of Glutamyl-tRNA(Gln) amidotransferase subunit B, mitochondrial from Lodderomyces elongisporus (strain ATCC 11503 / CBS 2605 / JCM 1781 / NBRC 1676 / NRRL YB-4239) (Yeast).